Consider the following 151-residue polypeptide: UPF0208 membrane protein YPDSF_1972 (151 aa).

A run of 2 helical transmembrane segments spans residues 46 to 66 (FGIRFMPPLAIFTLTWQIALG) and 69 to 89 (LGPAIATALFACGLPLQGLWW).

This sequence belongs to the UPF0208 family.

The protein resides in the cell inner membrane. This chain is UPF0208 membrane protein YPDSF_1972, found in Yersinia pestis (strain Pestoides F).